We begin with the raw amino-acid sequence, 606 residues long: Double-stranded RNA-binding protein Staufen homolog 2 (606 aa).

DRBM domains follow at residues 8–75 (TPMC…ESSL) and 95–181 (TPTV…ALKN). 2 disordered regions span residues 57 to 97 (SIKK…ITPT) and 177 to 205 (QALKNEPIPERPPQCSEEKKETEENSDAS). A compositionally biased stretch (polar residues) spans 85 to 97 (ADSNSNPGSITPT). A compositionally biased stretch (basic and acidic residues) spans 192–205 (SEEKKETEENSDAS). DRBM domains lie at 207-274 (SEIS…ELKK), 307-375 (NPIS…QLGY), and 493-557 (QPSQ…QLSE). Residues 580-606 (RLAERTESKPTNSGTTAQDCKDSKAVV) form a disordered region. The segment covering 588–597 (KPTNSGTTAQ) has biased composition (polar residues).

In terms of biological role, RNA-binding protein required for the microtubule-dependent transport of RNAs within polarized cell types. The polypeptide is Double-stranded RNA-binding protein Staufen homolog 2 (stau2) (Danio rerio (Zebrafish)).